A 320-amino-acid chain; its full sequence is Agamous-like MADS-box protein AGL90 (320 aa).

In terms of domain architecture, MADS-box spans 1 to 59 (MKKVKLSLIANERSRKTSFMKRKNGIFKKLHELSTLCGVQACALIYSPFIPVPESWPSR). Positions 80–115 (KMMDQETHLMERITKAKEQLKNLAAENRELQVRRFM) form a coiled coil.

In terms of assembly, interacts with AGL62.

The protein resides in the nucleus. Its function is as follows. Probable transcription factor. The protein is Agamous-like MADS-box protein AGL90 (AGL90) of Arabidopsis thaliana (Mouse-ear cress).